The chain runs to 186 residues: Probable RNA 2'-phosphotransferase (186 aa).

This sequence belongs to the KptA/TPT1 family.

In terms of biological role, removes the 2'-phosphate from RNA via an intermediate in which the phosphate is ADP-ribosylated by NAD followed by a presumed transesterification to release the RNA and generate ADP-ribose 1''-2''-cyclic phosphate (APPR&gt;P). May function as an ADP-ribosylase. The chain is Probable RNA 2'-phosphotransferase from Agrobacterium fabrum (strain C58 / ATCC 33970) (Agrobacterium tumefaciens (strain C58)).